We begin with the raw amino-acid sequence, 721 residues long: Polyphosphate kinase (721 aa).

Asn54 contacts ATP. Residues Arg379 and Arg409 each coordinate Mg(2+). The PLD phosphodiesterase domain occupies 434 to 468 (THLKTHSKIALVVKRIGGELTSFVHLGTGNYNDKT). His439 acts as the Phosphohistidine intermediate in catalysis. ATP contacts are provided by Tyr472, Arg568, and His596.

It belongs to the polyphosphate kinase 1 (PPK1) family. Requires Mg(2+) as cofactor. An intermediate of this reaction is the autophosphorylated ppk in which a phosphate is covalently linked to a histidine residue through a N-P bond.

The enzyme catalyses [phosphate](n) + ATP = [phosphate](n+1) + ADP. In terms of biological role, catalyzes the reversible transfer of the terminal phosphate of ATP to form a long-chain polyphosphate (polyP). The sequence is that of Polyphosphate kinase from Staphylococcus haemolyticus (strain JCSC1435).